The following is a 124-amino-acid chain: Large ribosomal subunit protein uL14 (124 aa).

It belongs to the universal ribosomal protein uL14 family. Part of the 50S ribosomal subunit. Forms a cluster with proteins L3 and L19. In the 70S ribosome, L14 and L19 interact and together make contacts with the 16S rRNA in bridges B5 and B8.

Binds to 23S rRNA. Forms part of two intersubunit bridges in the 70S ribosome. The protein is Large ribosomal subunit protein uL14 of Mycoplasmoides gallisepticum (strain R(low / passage 15 / clone 2)) (Mycoplasma gallisepticum).